The chain runs to 87 residues: Alpha-toxin To2 (87 aa).

Residues 1 to 20 form the signal peptide; the sequence is MIRFVLFISCFFLIGTVVEC. One can recognise an LCN-type CS-alpha/beta domain in the interval 22 to 84; the sequence is KDGYLMEGDG…IWDSKNNKCG (63 aa). Disulfide bonds link Cys-32/Cys-83, Cys-36/Cys-58, Cys-44/Cys-64, and Cys-48/Cys-66. Lys-85 carries the lysine amide modification.

Expressed by the venom gland.

It localises to the secreted. Alpha toxins bind voltage-independently at site-3 of sodium channels (Nav) and inhibit the inactivation of the activated channels, thereby blocking neuronal transmission. Affects the tetrodotoxin-sensitive sodium current permeability of F-11 rat neuroblastoma cells. Produces a dose dependent increase in amplitude and duration of the current. The polypeptide is Alpha-toxin To2 (Tityus obscurus (Amazonian scorpion)).